Consider the following 285-residue polypeptide: Bifunctional protein FolD (285 aa).

NADP(+) contacts are provided by residues 166–168 (GAS) and Ile232.

This sequence belongs to the tetrahydrofolate dehydrogenase/cyclohydrolase family. Homodimer.

It carries out the reaction (6R)-5,10-methylene-5,6,7,8-tetrahydrofolate + NADP(+) = (6R)-5,10-methenyltetrahydrofolate + NADPH. The enzyme catalyses (6R)-5,10-methenyltetrahydrofolate + H2O = (6R)-10-formyltetrahydrofolate + H(+). Its pathway is one-carbon metabolism; tetrahydrofolate interconversion. Functionally, catalyzes the oxidation of 5,10-methylenetetrahydrofolate to 5,10-methenyltetrahydrofolate and then the hydrolysis of 5,10-methenyltetrahydrofolate to 10-formyltetrahydrofolate. This is Bifunctional protein FolD from Baumannia cicadellinicola subsp. Homalodisca coagulata.